Here is a 511-residue protein sequence, read N- to C-terminus: Cytochrome P450 76C4 (511 aa).

The helical transmembrane segment at 3 to 23 (IISGQALFLLFCFISSCFLIS) threads the bilayer. Residue C450 coordinates heme.

It belongs to the cytochrome P450 family. Requires heme as cofactor.

It localises to the membrane. The sequence is that of Cytochrome P450 76C4 (CYP76C4) from Arabidopsis thaliana (Mouse-ear cress).